The sequence spans 130 residues: Glycine cleavage system H protein (130 aa).

The Lipoyl-binding domain maps to 22–103 (KAYIGISDCA…PYGSWIAAIE (82 aa)). Lysine 63 carries the N6-lipoyllysine modification.

Belongs to the GcvH family. The glycine cleavage system is composed of four proteins: P, T, L and H. (R)-lipoate serves as cofactor.

Its function is as follows. The glycine cleavage system catalyzes the degradation of glycine. The H protein shuttles the methylamine group of glycine from the P protein to the T protein. This is Glycine cleavage system H protein from Clostridium botulinum (strain Okra / Type B1).